A 208-amino-acid polypeptide reads, in one-letter code: Fibroblast growth factor-binding protein 2 (208 aa).

The first 19 residues, 1–19 (MKRVALLFLVVICGMGGLG), serve as a signal peptide directing secretion. Cystine bridges form between Cys-43–Cys-59, Cys-68–Cys-102, and Cys-77–Cys-113. The tract at residues 130-181 (EPEDGANRDKSSQKTSASVRGAGKSSVKKTGKPAVLPRIKPTQHGQGSENET) is disordered. Cys-191 and Cys-199 form a disulfide bridge.

It belongs to the fibroblast growth factor-binding protein family.

It localises to the secreted. It is found in the extracellular space. This chain is Fibroblast growth factor-binding protein 2 (FGFBP2), found in Gallus gallus (Chicken).